A 95-amino-acid chain; its full sequence is MKITKVAVAGTLESSDVQVRVQPFDSLDIEINSSVAKQFGEQIEATVREVLAKLGITAAQVIVEDKGALDCVLQARVKAAAMRATDETINWEAVL.

O-(phosphoribosyl dephospho-coenzyme A)serine is present on S14.

This sequence belongs to the CitD family. In terms of assembly, oligomer with a subunit composition of (alpha,beta,gamma)6.

The protein resides in the cytoplasm. Functionally, covalent carrier of the coenzyme of citrate lyase. This chain is Citrate lyase acyl carrier protein, found in Haemophilus influenzae (strain 86-028NP).